The following is a 252-amino-acid chain: MLLCIDIGNTNTVLATFDGDELVHSWRIKTDALSTADELGLMFRGLLAGDAVEVTGVAACSTVPTALRSVRTMLDRYYPDLPHMIVEPGVRTGVQLAIDNPKEVGADRVVNTLATYTLYGGPSIVVDFGTTTNFDVISGRGEFLGGAFAPGIEISFDALAARAAQLRKVEATRPRSVIGKNTVECLQAGLYFGFAGQVDRIVERMVEELGDVRAVIATGGLAPLVIKECRTITHHEPMITLIGLRMVYDRNV.

6-13 (DIGNTNTV) is an ATP binding site. Position 105–108 (105–108 (GADR)) interacts with substrate. D107 functions as the Proton acceptor in the catalytic mechanism. D127 contacts K(+). T130 is a binding site for ATP. Residue T182 coordinates substrate.

Belongs to the type III pantothenate kinase family. Homodimer. NH4(+) is required as a cofactor. Requires K(+) as cofactor.

The protein resides in the cytoplasm. It carries out the reaction (R)-pantothenate + ATP = (R)-4'-phosphopantothenate + ADP + H(+). It participates in cofactor biosynthesis; coenzyme A biosynthesis; CoA from (R)-pantothenate: step 1/5. Catalyzes the phosphorylation of pantothenate (Pan), the first step in CoA biosynthesis. The chain is Type III pantothenate kinase from Salinispora arenicola (strain CNS-205).